A 151-amino-acid chain; its full sequence is Ribosome maturation factor RimP (151 aa).

The protein belongs to the RimP family.

It is found in the cytoplasm. Required for maturation of 30S ribosomal subunits. This is Ribosome maturation factor RimP from Halorhodospira halophila (strain DSM 244 / SL1) (Ectothiorhodospira halophila (strain DSM 244 / SL1)).